Consider the following 116-residue polypeptide: Large ribosomal subunit protein bL19 (116 aa).

This sequence belongs to the bacterial ribosomal protein bL19 family.

This protein is located at the 30S-50S ribosomal subunit interface and may play a role in the structure and function of the aminoacyl-tRNA binding site. This Staphylococcus haemolyticus (strain JCSC1435) protein is Large ribosomal subunit protein bL19.